The following is a 204-amino-acid chain: CDP-archaeol synthase (204 aa).

The next 6 helical transmembrane spans lie at 5–25, 43–63, 91–111, 116–136, 147–167, and 175–195; these read VYAC…YVIL, MLWV…SRLV, FEGF…LAYA, GVSA…GAFV, PAIL…QGLF, and VVVA…MAAF.

Belongs to the CDP-archaeol synthase family. It depends on Mg(2+) as a cofactor.

Its subcellular location is the cell membrane. It catalyses the reaction 2,3-bis-O-(geranylgeranyl)-sn-glycerol 1-phosphate + CTP + H(+) = CDP-2,3-bis-O-(geranylgeranyl)-sn-glycerol + diphosphate. It participates in membrane lipid metabolism; glycerophospholipid metabolism. Functionally, catalyzes the formation of CDP-2,3-bis-(O-geranylgeranyl)-sn-glycerol (CDP-archaeol) from 2,3-bis-(O-geranylgeranyl)-sn-glycerol 1-phosphate (DGGGP) and CTP. This reaction is the third ether-bond-formation step in the biosynthesis of archaeal membrane lipids. In Thermofilum pendens (strain DSM 2475 / Hrk 5), this protein is CDP-archaeol synthase.